The primary structure comprises 571 residues: Proline--tRNA ligase (571 aa).

It belongs to the class-II aminoacyl-tRNA synthetase family. ProS type 1 subfamily. In terms of assembly, homodimer.

It localises to the cytoplasm. It carries out the reaction tRNA(Pro) + L-proline + ATP = L-prolyl-tRNA(Pro) + AMP + diphosphate. Catalyzes the attachment of proline to tRNA(Pro) in a two-step reaction: proline is first activated by ATP to form Pro-AMP and then transferred to the acceptor end of tRNA(Pro). As ProRS can inadvertently accommodate and process non-cognate amino acids such as alanine and cysteine, to avoid such errors it has two additional distinct editing activities against alanine. One activity is designated as 'pretransfer' editing and involves the tRNA(Pro)-independent hydrolysis of activated Ala-AMP. The other activity is designated 'posttransfer' editing and involves deacylation of mischarged Ala-tRNA(Pro). The misacylated Cys-tRNA(Pro) is not edited by ProRS. The sequence is that of Proline--tRNA ligase from Vibrio cholerae serotype O1 (strain ATCC 39541 / Classical Ogawa 395 / O395).